We begin with the raw amino-acid sequence, 116 residues long: T cell receptor alpha variable 38-2/delta variable 8 (116 aa).

An N-terminal signal peptide occupies residues 1 to 21; it reads MACPGFLWALVISTCLEFSMA. The 95-residue stretch at 22–116 folds into the Ig-like domain; sequence QTVTQSQPEM…AAMYFCAYRS (95 aa). A disulfide bridge links Cys43 with Cys112. The N-linked (GlcNAc...) asparagine glycan is linked to Asn78.

As to quaternary structure, alpha-beta TR is a heterodimer composed of an alpha and beta chain; disulfide-linked. The alpha-beta TR is associated with the transmembrane signaling CD3 coreceptor proteins to form the TR-CD3 (TcR or TCR). The assembly of alpha-beta TR heterodimers with CD3 occurs in the endoplasmic reticulum where a single alpha-beta TR heterodimer associates with one CD3D-CD3E heterodimer, one CD3G-CD3E heterodimer and one CD247 homodimer forming a stable octameric structure. CD3D-CD3E and CD3G-CD3E heterodimers preferentially associate with TR alpha and TR beta chains, respectively. The association of the CD247 homodimer is the last step of TcR assembly in the endoplasmic reticulum and is required for transport to the cell surface.

The protein localises to the cell membrane. Functionally, v region of the variable domain of T cell receptor (TR) alpha chain that participates in the antigen recognition. Alpha-beta T cell receptors are antigen specific receptors which are essential to the immune response and are present on the cell surface of T lymphocytes. Recognize peptide-major histocompatibility (MH) (pMH) complexes that are displayed by antigen presenting cells (APC), a prerequisite for efficient T cell adaptive immunity against pathogens. Binding of alpha-beta TR to pMH complex initiates TR-CD3 clustering on the cell surface and intracellular activation of LCK that phosphorylates the ITAM motifs of CD3G, CD3D, CD3E and CD247 enabling the recruitment of ZAP70. In turn ZAP70 phosphorylates LAT, which recruits numerous signaling molecules to form the LAT signalosome. The LAT signalosome propagates signal branching to three major signaling pathways, the calcium, the mitogen-activated protein kinase (MAPK) kinase and the nuclear factor NF-kappa-B (NF-kB) pathways, leading to the mobilization of transcription factors that are critical for gene expression and essential for T cell growth and differentiation. The T cell repertoire is generated in the thymus, by V-(D)-J rearrangement. This repertoire is then shaped by intrathymic selection events to generate a peripheral T cell pool of self-MH restricted, non-autoaggressive T cells. Post-thymic interaction of alpha-beta TR with the pMH complexes shapes TR structural and functional avidity. The sequence is that of T cell receptor alpha variable 38-2/delta variable 8 from Homo sapiens (Human).